Consider the following 451-residue polypeptide: Medium-chain fatty acid ethyl ester synthase/esterase 2 (451 aa).

Lys114 participates in a covalent cross-link: Glycyl lysine isopeptide (Lys-Gly) (interchain with G-Cter in ubiquitin). In terms of domain architecture, AB hydrolase-1 spans 166–430 (PLVVILHGLA…GGHLAYLDKD (265 aa)). Catalysis depends on charge relay system residues Ser247, Asp395, and His423.

Belongs to the AB hydrolase superfamily. AB hydrolase 4 family.

It carries out the reaction an aliphatic alcohol + acetyl-CoA = an acetyl ester + CoA. Its function is as follows. Displays enzymatic activity both for medium-chain fatty acid (MCFA) ethyl ester synthesis and hydrolysis (esterase activity). MCFA are toxic for yeast and this enzyme could thus be involved in their detoxification by esterification. The sequence is that of Medium-chain fatty acid ethyl ester synthase/esterase 2 (EHT1) from Saccharomyces cerevisiae (strain ATCC 204508 / S288c) (Baker's yeast).